The chain runs to 332 residues: Ketol-acid reductoisomerase (NADP(+)) (332 aa).

The 182-residue stretch at 1-182 (MAVIYYDKDC…GSNRAGILET (182 aa)) folds into the KARI N-terminal Rossmann domain. Residues 25-28 (YGAQ) and 83-86 (DTSQ) each bind NADP(+). His108 is an active-site residue. Gly134 is a binding site for NADP(+). The region spanning 183–328 (TFAEETETDL…AELRSMMSWL (146 aa)) is the KARI C-terminal knotted domain. Positions 191, 195, 227, and 231 each coordinate Mg(2+). Ser252 is a binding site for substrate.

The protein belongs to the ketol-acid reductoisomerase family. Mg(2+) serves as cofactor.

It catalyses the reaction (2R)-2,3-dihydroxy-3-methylbutanoate + NADP(+) = (2S)-2-acetolactate + NADPH + H(+). It carries out the reaction (2R,3R)-2,3-dihydroxy-3-methylpentanoate + NADP(+) = (S)-2-ethyl-2-hydroxy-3-oxobutanoate + NADPH + H(+). The protein operates within amino-acid biosynthesis; L-isoleucine biosynthesis; L-isoleucine from 2-oxobutanoate: step 2/4. It functions in the pathway amino-acid biosynthesis; L-valine biosynthesis; L-valine from pyruvate: step 2/4. In terms of biological role, involved in the biosynthesis of branched-chain amino acids (BCAA). Catalyzes an alkyl-migration followed by a ketol-acid reduction of (S)-2-acetolactate (S2AL) to yield (R)-2,3-dihydroxy-isovalerate. In the isomerase reaction, S2AL is rearranged via a Mg-dependent methyl migration to produce 3-hydroxy-3-methyl-2-ketobutyrate (HMKB). In the reductase reaction, this 2-ketoacid undergoes a metal-dependent reduction by NADPH to yield (R)-2,3-dihydroxy-isovalerate. The protein is Ketol-acid reductoisomerase (NADP(+)) of Dehalococcoides mccartyi (strain ATCC BAA-2100 / JCM 16839 / KCTC 5957 / BAV1).